The following is a 129-amino-acid chain: Small ribosomal subunit protein uS11 (129 aa).

This sequence belongs to the universal ribosomal protein uS11 family. As to quaternary structure, part of the 30S ribosomal subunit. Interacts with proteins S7 and S18. Binds to IF-3.

Its function is as follows. Located on the platform of the 30S subunit, it bridges several disparate RNA helices of the 16S rRNA. Forms part of the Shine-Dalgarno cleft in the 70S ribosome. This is Small ribosomal subunit protein uS11 from Bartonella tribocorum (strain CIP 105476 / IBS 506).